A 62-amino-acid polypeptide reads, in one-letter code: Insect toxin BsIT4 (62 aa).

Residues 1 to 62 (DGYIKGNKGC…WLYAATNTCG (62 aa)) form the LCN-type CS-alpha/beta domain. 4 cysteine pairs are disulfide-bonded: Cys-10/Cys-61, Cys-14/Cys-35, Cys-21/Cys-42, and Cys-25/Cys-44.

Belongs to the long (4 C-C) scorpion toxin superfamily. Sodium channel inhibitor family. Beta subfamily. In terms of tissue distribution, expressed by the venom gland.

Its subcellular location is the secreted. Depressant insect beta-toxins cause a transient contraction paralysis followed by a slow flaccid paralysis. They bind voltage-independently at site-4 of sodium channels (Nav) and shift the voltage of activation toward more negative potentials thereby affecting sodium channel activation and promoting spontaneous and repetitive firing. This toxin is active only on insects. The sequence is that of Insect toxin BsIT4 from Hottentotta tamulus sindicus (Scorpion).